The following is a 204-amino-acid chain: DPAVDIFDREARFIEQVMEPIRQHFPELKIVFEHITTKEAAQYVQAGNRFLGATITPQHLMFNRNHMLVGGIRPHLFCLPILKRNVHQEALRQAVASGSDRFFLGTDSAPHLKHRKESSCGCAGCFNAPNAIPAYAAVFEQLGALEHFEAFCSLNGPRFYGLPLNEDFIELQRVPTTQPEEIALGNESVIPFLAGETLNWSLKD.

Histidine 34 is a Zn(2+) binding site. Leucine 79 provides a ligand contact to substrate. Residue aspartate 107 participates in Zn(2+) binding. Residue aspartate 107 is part of the active site. The substrate site is built by histidine 111 and alanine 123.

The protein belongs to the metallo-dependent hydrolases superfamily. DHOase family. Class II DHOase subfamily. Homodimer. Requires Zn(2+) as cofactor.

It carries out the reaction (S)-dihydroorotate + H2O = N-carbamoyl-L-aspartate + H(+). Its pathway is pyrimidine metabolism; UMP biosynthesis via de novo pathway; (S)-dihydroorotate from bicarbonate: step 3/3. Functionally, catalyzes the reversible cyclization of carbamoyl aspartate to dihydroorotate. The protein is Dihydroorotase of Serratia marcescens.